Reading from the N-terminus, the 121-residue chain is UPF0231 protein ESA_03214 (121 aa).

Belongs to the UPF0231 family.

This is UPF0231 protein ESA_03214 from Cronobacter sakazakii (strain ATCC BAA-894) (Enterobacter sakazakii).